The following is a 629-amino-acid chain: Probable alpha-L-arabinofuranosidase A (629 aa).

Positions 1 to 25 are cleaved as a signal peptide; that stretch reads MVALSTLSGLSALPFLFSLVQNVYG. Asn36, Asn51, Asn140, Asn152, Asn168, Asn171, Asn260, Asn494, and Asn534 each carry an N-linked (GlcNAc...) asparagine glycan.

Belongs to the glycosyl hydrolase 51 family.

It is found in the secreted. It catalyses the reaction Hydrolysis of terminal non-reducing alpha-L-arabinofuranoside residues in alpha-L-arabinosides.. The protein operates within glycan metabolism; L-arabinan degradation. Functionally, alpha-L-arabinofuranosidase involved in the degradation of arabinoxylan, a major component of plant hemicellulose. Acts only on small linear 1,5-alpha-linked L-arabinofuranosyl oligosaccharides. The sequence is that of Probable alpha-L-arabinofuranosidase A (abfA) from Aspergillus flavus (strain ATCC 200026 / FGSC A1120 / IAM 13836 / NRRL 3357 / JCM 12722 / SRRC 167).